Consider the following 111-residue polypeptide: Large ribosomal subunit protein uL22 (111 aa).

Belongs to the universal ribosomal protein uL22 family. As to quaternary structure, part of the 50S ribosomal subunit.

Functionally, this protein binds specifically to 23S rRNA; its binding is stimulated by other ribosomal proteins, e.g. L4, L17, and L20. It is important during the early stages of 50S assembly. It makes multiple contacts with different domains of the 23S rRNA in the assembled 50S subunit and ribosome. The globular domain of the protein is located near the polypeptide exit tunnel on the outside of the subunit, while an extended beta-hairpin is found that lines the wall of the exit tunnel in the center of the 70S ribosome. The chain is Large ribosomal subunit protein uL22 from Legionella pneumophila (strain Lens).